Consider the following 354-residue polypeptide: Arginase-2, mitochondrial (354 aa).

Residues 1–22 (MFLRSSVSRLLHGQIPCALTRS) constitute a mitochondrion transit peptide. His-120, Asp-143, His-145, and Asp-147 together coordinate Mn(2+). Substrate-binding positions include 145 to 149 (HADIN), 156 to 158 (SGN), and Glu-202. Residues Asp-251 and Asp-253 each contribute to the Mn(2+) site. The substrate site is built by Thr-265 and Glu-296.

Belongs to the arginase family. In terms of assembly, homotrimer. Requires Mn(2+) as cofactor.

Its subcellular location is the mitochondrion. The catalysed reaction is L-arginine + H2O = urea + L-ornithine. Its pathway is nitrogen metabolism; urea cycle; L-ornithine and urea from L-arginine: step 1/1. Its function is as follows. May play a role in the regulation of extra-urea cycle arginine metabolism and also in down-regulation of nitric oxide synthesis. Extrahepatic arginase functions to regulate L-arginine bioavailability to nitric oxid synthase (NOS). Arginine metabolism is a critical regulator of innate and adaptive immune responses. Seems to be involved in negative regulation of the survival capacity of activated T cells. May suppress inflammation-related signaling in asthmatic airway epithelium. May play a role in promoting prenatal immune suppression. Regulates RPS6KB1 signaling, which promotes endothelial cell senescence and inflammation and implicates NOS3/eNOS dysfunction. Can inhibit endothelial autophagy independently of its enzymatic activity implicating mTORC2 signaling. Involved in vascular smooth muscle cell senescence and apoptosis independently of its enzymatic activity. In Rattus norvegicus (Rat), this protein is Arginase-2, mitochondrial (Arg2).